The chain runs to 699 residues: Macoilin-2 (699 aa).

4 helical membrane-spanning segments follow: residues 28 to 48 (TFLY…DFVL), 75 to 95 (AFSV…LLFI), 120 to 140 (VCLP…AIRF), and 154 to 174 (FAAH…KSYV). 4 disordered regions span residues 219–289 (AAAA…SILP), 322–411 (LLKD…PNNQ), 432–451 (LQAS…SLGT), and 679–699 (FMDT…PLKK). Residues Asn-241, Asn-267, Asn-345, and Asn-365 are each glycosylated (N-linked (GlcNAc...) asparagine). Residues 257 to 271 (LEYREKERGKNESKK) show a composition bias toward basic and acidic residues. The span at 329 to 346 (SSSSSSTSSNSNKNYKNA) shows a compositional bias: low complexity. Residues 366–382 (GSVPSSSGPSSSASSSS) show a composition bias toward low complexity. Asn-690 carries N-linked (GlcNAc...) asparagine glycosylation.

This sequence belongs to the macoilin family.

The protein localises to the nucleus membrane. It localises to the cell projection. Its subcellular location is the axon. The protein resides in the rough endoplasmic reticulum membrane. Its function is as follows. May play a role in the regulation of neuronal activity. In Danio rerio (Zebrafish), this protein is Macoilin-2.